The chain runs to 381 residues: Homoserine O-succinyltransferase (381 aa).

One can recognise an AB hydrolase-1 domain in the interval 45–360 (NAVLVCHALN…PHGHDAFLLD (316 aa)). Ser-151 functions as the Nucleophile in the catalytic mechanism. Residue Arg-221 participates in substrate binding. Catalysis depends on residues Asp-321 and His-354. Asp-355 provides a ligand contact to substrate.

It belongs to the AB hydrolase superfamily. MetX family. In terms of assembly, homodimer.

The protein resides in the cytoplasm. The enzyme catalyses L-homoserine + succinyl-CoA = O-succinyl-L-homoserine + CoA. Its pathway is amino-acid biosynthesis; L-methionine biosynthesis via de novo pathway; O-succinyl-L-homoserine from L-homoserine: step 1/1. Its function is as follows. Transfers a succinyl group from succinyl-CoA to L-homoserine, forming succinyl-L-homoserine. The protein is Homoserine O-succinyltransferase of Paraburkholderia xenovorans (strain LB400).